A 375-amino-acid chain; its full sequence is CMP-N-acetylneuraminate-beta-1,4-galactoside alpha-2,3-sialyltransferase (375 aa).

Over 1–8 the chain is Cytoplasmic; it reads MGLLVFVR. A helical; Signal-anchor for type II membrane protein membrane pass occupies residues 9–28; the sequence is NLLLALCLFLVLGFLYYSAW. At 29–375 the chain is on the lumenal side; it reads KLHLLQWEED…RVITDLSSGI (347 aa). N-linked (GlcNAc...) asparagine glycosylation is found at N80 and N171. C160 and C314 are joined by a disulfide.

This sequence belongs to the glycosyltransferase 29 family. The soluble form derives from the membrane form by proteolytic processing. In terms of tissue distribution, highly expressed in adult skeletal muscle and in all fetal tissues examined and to a much lesser extent in placenta, lung and liver.

It is found in the golgi apparatus. Its subcellular location is the golgi stack membrane. The protein localises to the secreted. It carries out the reaction a beta-D-galactosyl-(1-&gt;4)-N-acetyl-beta-D-glucosaminyl derivative + CMP-N-acetyl-beta-neuraminate = an N-acetyl-alpha-neuraminyl-(2-&gt;3)-beta-D-galactosyl-(1-&gt;4)-N-acetyl-beta-D-glucosaminyl derivative + CMP + H(+). It functions in the pathway protein modification; protein glycosylation. Catalyzes the formation of the NeuAc-alpha-2,3-Gal-beta-1,4-GlcNAc-, NeuAc-alpha-2,3-Gal-beta-1,3-GlcNAc- and NeuAc-alpha-2,3-Gal-beta-1,3-GalNAc- sequences found in terminal carbohydrate groups of glycoproteins and glycolipids. The highest activity is toward Gal-beta-1,3-GlcNAc and the lowest toward Gal-beta-1,3-GalNAc. This chain is CMP-N-acetylneuraminate-beta-1,4-galactoside alpha-2,3-sialyltransferase (ST3GAL3), found in Homo sapiens (Human).